Reading from the N-terminus, the 248-residue chain is Probable transcriptional regulatory protein PFL_4766 (248 aa).

It belongs to the TACO1 family.

It localises to the cytoplasm. The protein is Probable transcriptional regulatory protein PFL_4766 of Pseudomonas fluorescens (strain ATCC BAA-477 / NRRL B-23932 / Pf-5).